A 535-amino-acid polypeptide reads, in one-letter code: uncharacterized protein (535 aa).

WD repeat units lie at residues 189–226 (RDDFYTSLLSWSPKGDLAIGLAENIYLWSKELGPTRVL), 228–267 (ESIYDVSSVAYSYNGDILAVGRVDGTLQFWQDNERVPRIS), 269–314 (HHPG…AVLV), 320–359 (AHDEQVCGLTWNHDGSQFASGGNDNRVCLFKGSDLRQPLY), 362–404 (QQNA…KIDE), and 462–505 (VHSV…SWHN).

It belongs to the WD repeat CDC20/Fizzy family.

This is an uncharacterized protein from Schizosaccharomyces pombe (strain 972 / ATCC 24843) (Fission yeast).